A 297-amino-acid chain; its full sequence is Light-independent protochlorophyllide reductase iron-sulfur ATP-binding protein (297 aa).

ATP contacts are provided by residues 41–46 (GIGKST) and Lys-70. Ser-45 provides a ligand contact to Mg(2+). Residues Cys-126 and Cys-160 each contribute to the [4Fe-4S] cluster site. Residues 211–212 (NR) and 235–237 (PDL) each bind ATP.

This sequence belongs to the NifH/BchL/ChlL family. As to quaternary structure, homodimer. Protochlorophyllide reductase is composed of three subunits; BchL, BchN and BchB. [4Fe-4S] cluster is required as a cofactor.

It carries out the reaction chlorophyllide a + oxidized 2[4Fe-4S]-[ferredoxin] + 2 ADP + 2 phosphate = protochlorophyllide a + reduced 2[4Fe-4S]-[ferredoxin] + 2 ATP + 2 H2O. Its pathway is porphyrin-containing compound metabolism; bacteriochlorophyll biosynthesis (light-independent). Its function is as follows. Component of the dark-operative protochlorophyllide reductase (DPOR) that uses Mg-ATP and reduced ferredoxin to reduce ring D of protochlorophyllide (Pchlide) to form chlorophyllide a (Chlide). This reaction is light-independent. The L component serves as a unique electron donor to the NB-component of the complex, and binds Mg-ATP. This is Light-independent protochlorophyllide reductase iron-sulfur ATP-binding protein from Methylorubrum extorquens (strain CM4 / NCIMB 13688) (Methylobacterium extorquens).